The sequence spans 1670 residues: Hemolymph clottable protein (1670 aa).

Residues 1-14 (MKALILLLLGACQA) form the signal peptide. The interval 15–674 (LQPGLEYQYR…FANFVTTTIY (660 aa)) is vittelogenin. Positions 15–764 (LQPGLEYQYR…LKIDGQQRGL (750 aa)) constitute a Vitellogenin domain. The N-linked (GlcNAc...) asparagine glycan is linked to Asn-106. The segment covering 198 to 231 (SSYTTKTKSKTSSKTSSKTSSKTSSKTSKTGKTS) has biased composition (low complexity). The segment at 198 to 236 (SSYTTKTKSKTSSKTSSKTSSKTSSKTSKTGKTSPGQLA) is disordered. Asn-319, Asn-459, and Asn-1301 each carry an N-linked (GlcNAc...) asparagine glycan. Residues 1390 to 1550 (VSCTIDETKV…SWASPGEGCA (161 aa)) enclose the VWFD domain. Cystine bridges form between Cys-1392-Cys-1513 and Cys-1414-Cys-1549.

As to quaternary structure, homodimer; disulfide-linked. Also exists as oligomers. Glycosylated. Contains mannose and N-acetylglucosamine. Post-translationally, substrate of transglutaminase. Widely expressed with highest levels in gill and heart. Not expressed in hemocytes.

It is found in the secreted. Functionally, forms stable clots in the presence of calcium. The chain is Hemolymph clottable protein from Penaeus monodon (Giant tiger prawn).